The following is a 494-amino-acid chain: Homeotic protein bicoid (494 aa).

Disordered stretches follow at residues 1–49 (MAQP…PPQF), 149–210 (RRRH…TAHM), and 263–293 (QQVH…AQQQ). Residues 14 to 40 (PLPHTHTHPHPHSHPHPHSHPHPHHQH) show a composition bias toward basic residues. A DNA-binding region (homeobox) is located at residues 97 to 156 (PRRTRTTFTSSQIAELEQHFLQGRYLTAPRLADLSAKLALGTAQVKIWFKNRRRRHKIQS). Positions 154–163 (IQSDQHKDQS) are enriched in basic and acidic residues. The tract at residues 433 to 440 (RGAAFAKF) is RNA-binding.

This sequence belongs to the paired homeobox family. Bicoid subfamily. As to quaternary structure, interacts with Bin1; in vitro and yeast cells. Interacts with bin3. In terms of tissue distribution, maternal expression is an anterior cap concentrated in the cortical cytoplasm. Its transcript is produced maternally and sequestered near the anterior pole of the mature oocyte. After egg deposition, it is translated into protein, which diffuses toward the posterior, forming a long-range anterior gradient.

The protein resides in the nucleus. Segment polarity transcription factor that provides positional cues for the development of head and thoracic segments. Forms a protein concentration gradient that patterns the anterior-posterior axis during embryogenesis and promotes the expression of anterior gap genes, such as hunchback (hb), ocelliless (oc), and buttonhead (btd). Binds to regulatory DNA sequences containing a 5'-TAATCC-3' sequence motif. Also binds RNA. Interacts with Bin1 to repress transcription of bicoid target genes in the anterior tip of the embryo; a process known as retraction. The polypeptide is Homeotic protein bicoid (Drosophila melanogaster (Fruit fly)).